Here is a 1198-residue protein sequence, read N- to C-terminus: MAKADTLPVFLKSITIQGFKSFADKVKLELGQGLSVVVGPNGSGKSNVADAIRWVLGEQSAKNLRGSKMEDVIFSGSSVRRPVGMAEVSLFFDNSTGIFPLEYQEVIITRRVYRDGEGQYFINRSSCRLKDIHELFMDTGAGKEGFSIIGQGRVEEILNLRSEERRTLIEEASGITKYRMRKREALKRLDETEHNLERIRDILAEIEGQLGPLEEQATIAREAVELTTEQKALEIEIVAFDLKEVRHKLTTSVQETEELQSAIAAAVADLSQKESEILGNKVKLNLLDEQIQKQQETTYQLDQAVNQIVQELRLRQEREGYLGEQINRVTTELSSHEEKVRQSTEQLRALEDRKALLHKTLEQANQALAADEQRLAEAKARNGLEEIEILRGSLSHLQSKLAESTAELNRFTHQLATLNSTHEQLVKEKKDKEAALFSHEQQEAQVQEQLKAQEELQTDIRLQTERAHQETAQLREQSKAGQRELQELNRDLEKKSARYHALKNLEDSLEGYQRGVRELMLAKKKNQPSCGDLCGTLADLLQVEERYEVAVEVALGAGIQNIVTETERGAKEAVHYLKSHNLGRATFLPLDVIQGGKATVAKEAAQDPGFIGVAVDLITFAEKYRKAFESQLGRTLIVTDMEAATRVARASGYRARIVTLEGDQVHPGGSLTGGSLQRKGSNLLGRSREIQELRQECDERRTQQKEMELKAGALGTQIQKGEENLKHLMGEEQELKSALAVLRTQELNLRAQAQRIHEEVTAIAARMAGIEQERDELQSHKALGAEEQSKLTDSIQEAQEALARQEEKNRQASREMEQLQERLTQTKVQAAKWEQELKQAVERLAQDQALLGENKHLLERKRKDLQDLEESKARLAFEQGDWESRRREAGEQQQQAQEVLIALRKEREVLSKELMDQESLAQKKRQEQQTLEQKLHNLELKTARWDAEWETGSRRLLEEFDLTWDEAQTYQSERNRAELGARVQEIKLRMELLGPVNQAAIEEYPKLQERYDFLSVQKQDLEEANESLQQLIAELDKTMSERFEEGFIAVNEAFKVVFKELFNGGYAELRLVDPTNLLDTGVEIIAQPPGKKPQLLSLLSGGERALTAIGLLFALLKVKPSPFCVLDEIEASLDDANVSRFAQYIHRLSDSTQFLVISHRKGTMEAADVLYGITMEESGVSKLLSVQLEGQDKDTRTA.

P40–N47 serves as a coordination point for ATP. 2 coiled-coil regions span residues I175–G211 and L322–K524. The 114-residue stretch at C534–V647 folds into the SMC hinge domain. Positions S687–R1042 form a coiled coil. Residues A785 to Q818 are disordered. Over residues A803–Q818 the composition is skewed to basic and acidic residues.

The protein belongs to the SMC family. As to quaternary structure, homodimer.

It is found in the cytoplasm. Required for chromosome condensation and partitioning. The sequence is that of Chromosome partition protein Smc from Desulfitobacterium hafniense (strain Y51).